We begin with the raw amino-acid sequence, 182 residues long: Inner membrane-spanning protein YciB (182 aa).

A run of 5 helical transmembrane segments spans residues isoleucine 22 to valine 42, isoleucine 53 to phenylalanine 73, tryptophan 76 to phenylalanine 96, phenylalanine 121 to leucine 141, and phenylalanine 149 to isoleucine 169.

The protein belongs to the YciB family.

It is found in the cell inner membrane. Functionally, plays a role in cell envelope biogenesis, maintenance of cell envelope integrity and membrane homeostasis. This chain is Inner membrane-spanning protein YciB, found in Tolumonas auensis (strain DSM 9187 / NBRC 110442 / TA 4).